We begin with the raw amino-acid sequence, 305 residues long: CRISPR-associated endonuclease Cas1 (305 aa).

Residues 96-278 (SDKLLYQAKL…EDVLAAGEIQ (183 aa)) form a sufficient for cleavage of ssRNA, ssDNA and Holliday junction DNA region. Mg(2+) contacts are provided by E141, H208, and D221. Positions 278–305 (QPPAPPEDAQPVAIPLPVSLGDAGHRSS) are disordered.

It belongs to the CRISPR-associated endonuclease Cas1 family. Homodimer. Part of the Cas1-Cas2 complex. Interacts with RecB, RecC, RuvB, CasC and CasE. Forms a hexamer with 2 Cas1 dimers sandwiching a Cas2 dimer. The DNA lies across a flat surface extending from 1 Cas1 dimer, across the Cas2 dimer and contacting the other Cas1 dimer. Only 1 Cas1 protein from each dimer is catalytic, the other interacts with the Cas2 dimer and possibly target DNA. Mg(2+) serves as cofactor.

The protein localises to the cytoplasm. With respect to regulation, nuclease activity partially inhibited by CasE. Functionally, CRISPR (clustered regularly interspaced short palindromic repeat), is an adaptive immune system that provides protection against mobile genetic elements (viruses, transposable elements and conjugative plasmids). CRISPR clusters contain sequences complementary to antecedent mobile elements and target invading nucleic acids. CRISPR clusters are transcribed and processed into CRISPR RNA (crRNA). The Cas1-Cas2 complex is involved in CRISPR adaptation, the first stage of CRISPR immunity, being required for the addition/removal of CRISPR spacers at the leader end of the CRISPR locus. The Cas1-Cas2 complex introduces staggered nicks into both strands of the CRISPR array near the leader repeat and joins the 5'-ends of the repeat strands with the 3'-ends of the new spacer sequence. Spacer DNA integration requires supercoiled target DNA and 3'-OH ends on the inserted (spacer) DNA and probably initiates with a nucleophilic attack of the C 3'-OH end of the protospacer on the minus strand of the first repeat sequence. Expression of Cas1-Cas2 in a strain lacking both genes permits spacer acquisition. Non-specifically binds DNA; the Cas1-Cas2 complex preferentially binds CRISPR-locus DNA. Highest binding is seen to a dual forked DNA complex with 3'-overhangs and a protospacer-adjacent motif-complement specifically positioned. The protospacer DNA lies across a flat surface extending from 1 Cas1 dimer, across the Cas2 dimer and contacting the other Cas1 dimer; the 23 bp-long ds section of the DNA is bracketed by 1 Tyr-22 from each of the Cas1 dimers. Cas1 cuts within the 3'-overhang, to generate a 33-nucleotide DNA that is probably incorporated into the CRISPR leader by a cut-and-paste mechanism. Cas1 alone endonucleolytically cleaves linear ssRNA, ssDNA and short (34 base) dsDNA as well as branched DNA substrates such as Holliday junctions, replication forks and 5'-flap DNA substrates. In vitro catalyzes a concerted transesterification reaction on branched DNA, as would be expected during integration of protospacers into the CRISPR leader sequence; Cas2 is not required in vitro. This reaction requires a 3'-OH group at the branch point. Genetic interactions suggest Cas1 interacts with components of the RecBC and RuvB DNA repair systems. In Escherichia coli (strain K12), this protein is CRISPR-associated endonuclease Cas1 (ygbT).